The chain runs to 753 residues: Pesticidal crystal protein Cry20Aa (753 aa).

A compositionally biased stretch (polar residues) spans 680 to 696 (DTTYQPSYDNYNQNASG). Positions 680–721 (DTTYQPSYDNYNQNASGTYDDGYNPNASDSYDQSYTNNYSQN) are disordered. Over residues 712-721 (QSYTNNYSQN) the composition is skewed to low complexity.

The protein belongs to the delta endotoxin family. In terms of processing, has low mosquitocidal activity probably due to rapid proteolysis to inactive 56 kDa and 43 kDa proteins.

Functionally, promotes colloidosmotic lysis by binding to the midgut epithelial cells of mosquitos. Active against Aedes aegypti and Culex quinquefasciatus larvae. This chain is Pesticidal crystal protein Cry20Aa (cry20Aa), found in Bacillus thuringiensis subsp. fukuokaensis.